A 1028-amino-acid chain; its full sequence is Unconventional myosin-Ic (1028 aa).

The residue at position 1 (Met-1) is an N-acetylmethionine. A Myosin motor domain is found at 12–696; it reads GVQDFVLLEN…TLFATEDALE (685 aa). ATP contacts are provided by residues Asn-53, Tyr-61, 104–113, and 157–161; these read SGESGAGKTE and NDNSS. Lys-348 is subject to N6-methyllysine. An actin-binding region spans residues 573 to 595; sequence LSKLMEILMSKEPSYIRCIKPND. IQ domains lie at 699–728 and 722–751; these read KQSLATKMQATWRGFYRRKKFLHMKHSAIA and MKHSAIAIQSWWRGTLGRRKAAKRKWAVQT. In terms of domain architecture, TH1 spans 850–1024; that stretch reads KDNYPQSVPR…NGHLTVVAPR (175 aa).

It belongs to the TRAFAC class myosin-kinesin ATPase superfamily. Myosin family. In terms of assembly, interacts (via its IQ motifs) with CALM.

It is found in the cytoplasm. The protein resides in the cell cortex. The protein localises to the cell projection. It localises to the ruffle membrane. Its subcellular location is the cytoplasmic vesicle. It is found in the stereocilium membrane. In terms of biological role, myosins are actin-based motor molecules with ATPase activity. Unconventional myosins serve in intracellular movements. Their highly divergent tails are presumed to bind to membranous compartments, which would be moved relative to actin filaments. The protein is Unconventional myosin-Ic (MYO1C) of Gallus gallus (Chicken).